A 121-amino-acid chain; its full sequence is MEEVIQAGLAQWSRQKGLALPWDRTRGHPDVPWRNLTSSPTRPLAQPAGSCMPAEPSPAAHYHQLHVHLQLLPSDLSERPGLRLAPLALVEVGMTLPVPQTPLPHVTQQQKLAPGRQLCPW.

Residues 21–57 (PWDRTRGHPDVPWRNLTSSPTRPLAQPAGSCMPAEPS) form a disordered region.

Interacts with core protein of hepatitis B virus.

This chain is Putative viral protein-binding protein C1, found in Homo sapiens (Human).